The following is a 96-amino-acid chain: MATITKLDIIEYLSDKYHLSKQDTKNVVENFLEEIRLSLESGQDVKLSGFGNFELRDKSSRPGRNPKTGDVVPVSARRVVTFKPGQKLRARVEKTK.

Belongs to the bacterial histone-like protein family. In terms of assembly, heterodimer of an alpha and a beta chain.

Functionally, this protein is one of the two subunits of integration host factor, a specific DNA-binding protein that functions in genetic recombination as well as in transcriptional and translational control. This chain is Integration host factor subunit alpha, found in Haemophilus influenzae (strain 86-028NP).